The primary structure comprises 430 residues: Enolase (430 aa).

Gln163 contributes to the (2R)-2-phosphoglycerate binding site. Catalysis depends on Glu205, which acts as the Proton donor. Mg(2+) contacts are provided by Asp242, Glu287, and Asp314. Positions 339, 368, 369, and 390 each coordinate (2R)-2-phosphoglycerate. Lys339 acts as the Proton acceptor in catalysis.

This sequence belongs to the enolase family. The cofactor is Mg(2+).

The protein localises to the cytoplasm. It is found in the secreted. It localises to the cell surface. It carries out the reaction (2R)-2-phosphoglycerate = phosphoenolpyruvate + H2O. The protein operates within carbohydrate degradation; glycolysis; pyruvate from D-glyceraldehyde 3-phosphate: step 4/5. Functionally, catalyzes the reversible conversion of 2-phosphoglycerate (2-PG) into phosphoenolpyruvate (PEP). It is essential for the degradation of carbohydrates via glycolysis. In Clostridioides difficile (strain 630) (Peptoclostridium difficile), this protein is Enolase.